The chain runs to 200 residues: Holliday junction branch migration complex subunit RuvA (200 aa).

Residues 1–65 form a domain I region; that stretch reads MYEYIKGTLT…ETEHVLYGFS (65 aa). The domain II stretch occupies residues 66 to 144; that stretch reads SRAERECFRL…TLMPLYLEEP (79 aa). Residues 145–149 are flexible linker; that stretch reads VVPSS. The tract at residues 150 to 200 is domain III; the sequence is TANSSFKEGIGALMNLGFSRLAADRMMTEAVKELSEEASVAELLPIALRKS.

It belongs to the RuvA family. In terms of assembly, homotetramer. Forms an RuvA(8)-RuvB(12)-Holliday junction (HJ) complex. HJ DNA is sandwiched between 2 RuvA tetramers; dsDNA enters through RuvA and exits via RuvB. An RuvB hexamer assembles on each DNA strand where it exits the tetramer. Each RuvB hexamer is contacted by two RuvA subunits (via domain III) on 2 adjacent RuvB subunits; this complex drives branch migration. In the full resolvosome a probable DNA-RuvA(4)-RuvB(12)-RuvC(2) complex forms which resolves the HJ.

The protein resides in the cytoplasm. Functionally, the RuvA-RuvB-RuvC complex processes Holliday junction (HJ) DNA during genetic recombination and DNA repair, while the RuvA-RuvB complex plays an important role in the rescue of blocked DNA replication forks via replication fork reversal (RFR). RuvA specifically binds to HJ cruciform DNA, conferring on it an open structure. The RuvB hexamer acts as an ATP-dependent pump, pulling dsDNA into and through the RuvAB complex. HJ branch migration allows RuvC to scan DNA until it finds its consensus sequence, where it cleaves and resolves the cruciform DNA. The protein is Holliday junction branch migration complex subunit RuvA of Chlamydia trachomatis serovar D (strain ATCC VR-885 / DSM 19411 / UW-3/Cx).